A 377-amino-acid chain; its full sequence is Succinyl-diaminopimelate desuccinylase (377 aa).

H67 provides a ligand contact to Zn(2+). Residue D69 is part of the active site. Residue D100 participates in Zn(2+) binding. Residue E134 is the Proton acceptor of the active site. Residues E135, E163, and H349 each contribute to the Zn(2+) site.

The protein belongs to the peptidase M20A family. DapE subfamily. In terms of assembly, homodimer. Zn(2+) serves as cofactor. The cofactor is Co(2+).

The catalysed reaction is N-succinyl-(2S,6S)-2,6-diaminopimelate + H2O = (2S,6S)-2,6-diaminopimelate + succinate. The protein operates within amino-acid biosynthesis; L-lysine biosynthesis via DAP pathway; LL-2,6-diaminopimelate from (S)-tetrahydrodipicolinate (succinylase route): step 3/3. In terms of biological role, catalyzes the hydrolysis of N-succinyl-L,L-diaminopimelic acid (SDAP), forming succinate and LL-2,6-diaminopimelate (DAP), an intermediate involved in the bacterial biosynthesis of lysine and meso-diaminopimelic acid, an essential component of bacterial cell walls. The sequence is that of Succinyl-diaminopimelate desuccinylase from Glaesserella parasuis serovar 5 (strain SH0165) (Haemophilus parasuis).